Here is a 547-residue protein sequence, read N- to C-terminus: Chaperonin GroEL (547 aa).

Residues Thr-30–Pro-33, Lys-51, Asp-87–Thr-91, Gly-415, Asn-479–Ala-481, and Asp-495 each bind ATP.

This sequence belongs to the chaperonin (HSP60) family. As to quaternary structure, forms a cylinder of 14 subunits composed of two heptameric rings stacked back-to-back. Interacts with the co-chaperonin GroES.

It is found in the cytoplasm. The catalysed reaction is ATP + H2O + a folded polypeptide = ADP + phosphate + an unfolded polypeptide.. In terms of biological role, together with its co-chaperonin GroES, plays an essential role in assisting protein folding. The GroEL-GroES system forms a nano-cage that allows encapsulation of the non-native substrate proteins and provides a physical environment optimized to promote and accelerate protein folding. The protein is Chaperonin GroEL of Polynucleobacter necessarius subsp. necessarius (strain STIR1).